Here is a 279-residue protein sequence, read N- to C-terminus: ATP-dependent Clp protease proteolytic subunit-related protein 2, chloroplastic (279 aa).

The transit peptide at 1–54 (MAVSFNTTLHQPSLSPSCSIKLYSGLKPQSASFLASGYQNLNKEFYGRVYKSLQ) directs the protein to the chloroplast.

Belongs to the peptidase S14 family. Component of the chloroplastic Clp protease core complex which consist of at least 16 proteins: CLPP4 (3 copies), CLPP5 (3 copies), CLPR4 (2 copies), ClpP1 (1 copy), CLPP6 (1 copy), CLPR2 (1 copy), CLPT1 (1 copy), CLPT2 (1 copy) and 3 copies of CLPP3 and/or CLPR1 and/or CLPR3. The core complex is organized in two heptameric rings, one containing CLPP3,4,5,6 in a 1:2:3:1 ratio and the other CLPP1 and CLPR1,2,3,4 in a 3:1:1:1:1 ratio. Expressed at least in leaves and roots.

The protein localises to the plastid. The protein resides in the chloroplast. In terms of biological role, required for chloroplast development and integrity. Involved in the regulation of plastoglobules formation. The chain is ATP-dependent Clp protease proteolytic subunit-related protein 2, chloroplastic from Arabidopsis thaliana (Mouse-ear cress).